Reading from the N-terminus, the 428-residue chain is F-box/LRR-repeat protein 3 (428 aa).

Residues 1 to 21 (MKRGGRDSDRNSSEEGTAEKS) show a composition bias toward basic and acidic residues. Residues 1–27 (MKRGGRDSDRNSSEEGTAEKSKKLRTT) are disordered. Positions 34–81 (CDWGNLLQDIILQVFKYLPLLDRAHASQVCRNWNQVFHMPDLWRCFEF) constitute an F-box domain. LRR repeat units follow at residues 119 to 146 (SSKE…GLIS), 181 to 207 (DTPV…KMSS), 208 to 233 (CPHV…ALNY), 234 to 259 (HLLS…RIDV), 316 to 341 (GRSV…VVCA), 343 to 368 (GLRP…GLGE), and 369 to 394 (CEVS…SIME).

Part of the SCF (SKP1-CUL1-F-box) E3 ubiquitin-protein ligase complex SCF(FBXL3) composed of CUL1, SKP1, RBX1 and FBXL3. Interacts with CRY1 and CRY2 (phosphorylated). Interacts with HDAC3. Interacts with KDM8. Undergoes autophagy-mediated degradation in the liver in a time-dependent manner. As to expression, widely expressed.

The protein resides in the nucleus. It is found in the cytoplasm. It functions in the pathway protein modification; protein ubiquitination. Its function is as follows. Substrate-recognition component of the SCF(FBXL3) E3 ubiquitin ligase complex involved in circadian rhythm function. Plays a key role in the maintenance of both the speed and the robustness of the circadian clock oscillation. The SCF(FBXL3) complex mainly acts in the nucleus and mediates ubiquitination and subsequent degradation of CRY1 and CRY2. Activity of the SCF(FBXL3) complex is counteracted by the SCF(FBXL21) complex. The sequence is that of F-box/LRR-repeat protein 3 (FBXL3) from Homo sapiens (Human).